We begin with the raw amino-acid sequence, 176 residues long: Endoribonuclease YbeY (176 aa).

Residues His-138, His-142, and His-148 each coordinate Zn(2+).

It belongs to the endoribonuclease YbeY family. Zn(2+) serves as cofactor.

It is found in the cytoplasm. Single strand-specific metallo-endoribonuclease involved in late-stage 70S ribosome quality control and in maturation of the 3' terminus of the 16S rRNA. The protein is Endoribonuclease YbeY of Trichormus variabilis (strain ATCC 29413 / PCC 7937) (Anabaena variabilis).